The sequence spans 209 residues: ATP-dependent Clp protease proteolytic subunit (209 aa).

The active-site Nucleophile is the Ser107. Residue His132 is part of the active site.

The protein belongs to the peptidase S14 family. Fourteen ClpP subunits assemble into 2 heptameric rings which stack back to back to give a disk-like structure with a central cavity, resembling the structure of eukaryotic proteasomes.

Its subcellular location is the cytoplasm. The catalysed reaction is Hydrolysis of proteins to small peptides in the presence of ATP and magnesium. alpha-casein is the usual test substrate. In the absence of ATP, only oligopeptides shorter than five residues are hydrolyzed (such as succinyl-Leu-Tyr-|-NHMec, and Leu-Tyr-Leu-|-Tyr-Trp, in which cleavage of the -Tyr-|-Leu- and -Tyr-|-Trp bonds also occurs).. Its function is as follows. Cleaves peptides in various proteins in a process that requires ATP hydrolysis. Has a chymotrypsin-like activity. Plays a major role in the degradation of misfolded proteins. The sequence is that of ATP-dependent Clp protease proteolytic subunit from Ruegeria pomeroyi (strain ATCC 700808 / DSM 15171 / DSS-3) (Silicibacter pomeroyi).